We begin with the raw amino-acid sequence, 1034 residues long: Tubulin glycylase 3D (1034 aa).

Composition is skewed to polar residues over residues 1-13 (MINSHHTSQQTLN) and 131-146 (QVNSVLADNSNIQNDF). Disordered stretches follow at residues 1–21 (MINSHHTSQQTLNKESKSQMD), 131–166 (QVNSVLADNSNIQNDFYPQYRKPKNPTTKKRQSTDY), and 189–208 (LNQQNQQQQDLAKNRVDNSQ). The segment covering 151–161 (RKPKNPTTKKR) has biased composition (basic residues). Residues 189–199 (LNQQNQQQQDL) are compositionally biased toward low complexity. In terms of domain architecture, TTL spans 571–930 (DINNVIDDEK…YGMAQKSGIK (360 aa)). ATP is bound by residues 741-744 (QKYI), lysine 754, and aspartate 756. The interval 1002–1034 (HDQKQFSSQQANNIETYSRPQTAKSQTQSSKKL) is disordered.

The protein resides in the cytoplasm. Probable glycylase which modifies tubulin, generating side chains of glycine on the gamma-carboxyl groups of specific glutamate residues within the C-terminal tail of tubulin. The chain is Tubulin glycylase 3D (TTLL3D) from Tetrahymena thermophila (strain SB210).